Here is a 275-residue protein sequence, read N- to C-terminus: MYYKVLGQQNADAETVVLSSGLGGSGGFWQPQLAMLSAHFRVVVYDQYGTGASQGSVPAGYRMEDMADELAGLLNALNISRCHLVGHALGGIMGLHLALRYPALLQSLVVINGWTVLNSQTRRCFDVRRNLLLNSGVDAYVQAQPLFLYPGDWLSEHEAFLQEERQHQVANFQGMENLLHRLQALMDSDLTTSLKGVIAPTLALSAKDDLLVPWSCSADLASRLPHGEHLQMGYGGHAMSVTDPDTFNPILLDWLQRQASHPSGTPSDFIPVEMP.

In terms of domain architecture, AB hydrolase-1 spans 15 to 116 (TVVLSSGLGG…SLVVINGWTV (102 aa)).

Belongs to the AB hydrolase superfamily. Hydrolase RutD family.

The catalysed reaction is carbamate + 2 H(+) = NH4(+) + CO2. Involved in pyrimidine catabolism. May facilitate the hydrolysis of carbamate, a reaction that can also occur spontaneously. This Pantoea ananatis (strain LMG 20103) protein is Putative carbamate hydrolase RutD.